The primary structure comprises 308 residues: Glutaminase (308 aa).

Residues Ser66, Asn117, Glu161, Asn168, Tyr192, Tyr244, and Val262 each coordinate substrate.

It belongs to the glutaminase family. As to quaternary structure, homotetramer.

The enzyme catalyses L-glutamine + H2O = L-glutamate + NH4(+). This chain is Glutaminase, found in Cronobacter sakazakii (strain ATCC BAA-894) (Enterobacter sakazakii).